A 419-amino-acid polypeptide reads, in one-letter code: L-rhamnose isomerase (419 aa).

Residues H262, D294, and D296 each contribute to the Mn(2+) site.

The protein belongs to the rhamnose isomerase family. As to quaternary structure, homotetramer. It depends on Mn(2+) as a cofactor.

It is found in the cytoplasm. It catalyses the reaction L-rhamnopyranose = L-rhamnulose. Its pathway is carbohydrate degradation; L-rhamnose degradation; glycerone phosphate from L-rhamnose: step 1/3. Catalyzes the interconversion of L-rhamnose and L-rhamnulose. The polypeptide is L-rhamnose isomerase (Escherichia coli O17:K52:H18 (strain UMN026 / ExPEC)).